A 190-amino-acid chain; its full sequence is Crossover junction endodeoxyribonuclease RuvC (190 aa).

Active-site residues include Asp8, Glu67, and Asp139. The Mg(2+) site is built by Asp8, Glu67, and Asp139.

It belongs to the RuvC family. In terms of assembly, homodimer which binds Holliday junction (HJ) DNA. The HJ becomes 2-fold symmetrical on binding to RuvC with unstacked arms; it has a different conformation from HJ DNA in complex with RuvA. In the full resolvosome a probable DNA-RuvA(4)-RuvB(12)-RuvC(2) complex forms which resolves the HJ. Mg(2+) is required as a cofactor.

It is found in the cytoplasm. It catalyses the reaction Endonucleolytic cleavage at a junction such as a reciprocal single-stranded crossover between two homologous DNA duplexes (Holliday junction).. The RuvA-RuvB-RuvC complex processes Holliday junction (HJ) DNA during genetic recombination and DNA repair. Endonuclease that resolves HJ intermediates. Cleaves cruciform DNA by making single-stranded nicks across the HJ at symmetrical positions within the homologous arms, yielding a 5'-phosphate and a 3'-hydroxyl group; requires a central core of homology in the junction. The consensus cleavage sequence is 5'-(A/T)TT(C/G)-3'. Cleavage occurs on the 3'-side of the TT dinucleotide at the point of strand exchange. HJ branch migration catalyzed by RuvA-RuvB allows RuvC to scan DNA until it finds its consensus sequence, where it cleaves and resolves the cruciform DNA. This Haemophilus influenzae (strain 86-028NP) protein is Crossover junction endodeoxyribonuclease RuvC.